The sequence spans 123 residues: Putative iron-sulfur cluster insertion protein ErpA (123 aa).

Iron-sulfur cluster-binding residues include cysteine 51, cysteine 115, and cysteine 117.

It belongs to the HesB/IscA family. In terms of assembly, homodimer. Requires iron-sulfur cluster as cofactor.

Its function is as follows. Required for insertion of 4Fe-4S clusters. This Burkholderia cenocepacia (strain HI2424) protein is Putative iron-sulfur cluster insertion protein ErpA.